The sequence spans 915 residues: Protein O-mannosyl-transferase TMTC3 (915 aa).

The Cytoplasmic segment spans residues methionine 1–glutamate 8. Residues isoleucine 9–valine 29 traverse the membrane as a helical segment. Residues phenylalanine 30 to histidine 93 lie on the Extracellular side of the membrane. A helical membrane pass occupies residues leucine 94–phenylalanine 114. Over leucine 115 to serine 120 the chain is Cytoplasmic. Transmembrane regions (helical) follow at residues valine 121 to glycine 139 and valine 140 to serine 158. Topologically, residues tyrosine 159–aspartate 166 are cytoplasmic. A helical membrane pass occupies residues asparagine 167 to cysteine 187. At lysine 188–threonine 193 the chain is on the extracellular side. Residues valine 194–leucine 214 traverse the membrane as a helical segment. Topologically, residues cysteine 215 to serine 231 are cytoplasmic. A helical membrane pass occupies residues methionine 232–isoleucine 252. Residues arginine 253–aspartate 317 are Extracellular-facing. A helical transmembrane segment spans residues isoleucine 318 to isoleucine 338. The Cytoplasmic segment spans residues arginine 339–cysteine 353. The chain crosses the membrane as a helical span at residues leucine 354–alanine 374. The Extracellular portion of the chain corresponds to glutamate 375 to arginine 376. The chain crosses the membrane as a helical span at residues valine 377 to serine 397. The Cytoplasmic portion of the chain corresponds to threonine 398–lysine 404. A helical transmembrane segment spans residues leucine 405–histidine 423. Residues arginine 424–glutamate 915 are Extracellular-facing. TPR repeat units follow at residues alanine 446–aspartate 479, isoleucine 480–isoleucine 513, asparagine 529–phenylalanine 562, lysine 563–asparagine 596, alanine 597–histidine 631, alanine 669–phenylalanine 702, arginine 703–histidine 736, lysine 738–asparagine 771, and valine 772–glutamate 805. Asparagine 494 carries N-linked (GlcNAc...) asparagine glycosylation. Tyrosine 503 carries the phosphotyrosine modification. A glycan (N-linked (GlcNAc...) asparagine) is linked at asparagine 541. Positions lysine 848 to lysine 892 are disordered. N-linked (GlcNAc...) asparagine glycosylation is present at asparagine 865. Residues asparagine 865–glutamine 874 are compositionally biased toward low complexity. Residues asparagine 878 to lysine 892 are compositionally biased toward basic and acidic residues.

Belongs to the TMTC family.

Its subcellular location is the membrane. It is found in the endoplasmic reticulum. It catalyses the reaction a di-trans,poly-cis-dolichyl beta-D-mannosyl phosphate + L-seryl-[protein] = 3-O-(alpha-D-mannosyl)-L-seryl-[protein] + a di-trans,poly-cis-dolichyl phosphate + H(+). It carries out the reaction a di-trans,poly-cis-dolichyl beta-D-mannosyl phosphate + L-threonyl-[protein] = 3-O-(alpha-D-mannosyl)-L-threonyl-[protein] + a di-trans,poly-cis-dolichyl phosphate + H(+). The protein operates within protein modification; protein glycosylation. Transfers mannosyl residues to the hydroxyl group of serine or threonine residues. The 4 members of the TMTC family are O-mannosyl-transferases dedicated primarily to the cadherin superfamily, each member seems to have a distinct role in decorating the cadherin domains with O-linked mannose glycans at specific regions. Also acts as O-mannosyl-transferase on other proteins such as PDIA3. Involved in the positive regulation of proteasomal protein degradation in the endoplasmic reticulum (ER), and the control of ER stress response. This is Protein O-mannosyl-transferase TMTC3 from Homo sapiens (Human).